The chain runs to 231 residues: Small ribosomal subunit protein uS3 (231 aa).

The 70-residue stretch at 17–86 (VEQYLNKELK…SPQVEVQQVA (70 aa)) folds into the KH type-2 domain.

The protein belongs to the universal ribosomal protein uS3 family. In terms of assembly, part of the 30S ribosomal subunit.

Functionally, binds the lower part of the 30S subunit head. The sequence is that of Small ribosomal subunit protein uS3 from Methanocorpusculum labreanum (strain ATCC 43576 / DSM 4855 / Z).